A 253-amino-acid chain; its full sequence is Ribonuclease 3 (253 aa).

In terms of domain architecture, RNase III spans valine 29–glycine 157. Glutamate 70 contacts Mg(2+). Aspartate 74 is an active-site residue. Mg(2+)-binding residues include aspartate 143 and glutamate 146. The active site involves glutamate 146. The 70-residue stretch at aspartate 184–lysine 253 folds into the DRBM domain.

Belongs to the ribonuclease III family. In terms of assembly, homodimer. The cofactor is Mg(2+).

Its subcellular location is the cytoplasm. It carries out the reaction Endonucleolytic cleavage to 5'-phosphomonoester.. Its function is as follows. Digests double-stranded RNA. Involved in the processing of primary rRNA transcript to yield the immediate precursors to the large and small rRNAs (23S and 16S). Processes some mRNAs, and tRNAs when they are encoded in the rRNA operon. Processes pre-crRNA and tracrRNA of type II CRISPR loci if present in the organism. The chain is Ribonuclease 3 from Nitratidesulfovibrio vulgaris (strain ATCC 29579 / DSM 644 / CCUG 34227 / NCIMB 8303 / VKM B-1760 / Hildenborough) (Desulfovibrio vulgaris).